A 148-amino-acid polypeptide reads, in one-letter code: UPF0260 protein mll2411 (148 aa).

It belongs to the UPF0260 family.

This is UPF0260 protein mll2411 from Mesorhizobium japonicum (strain LMG 29417 / CECT 9101 / MAFF 303099) (Mesorhizobium loti (strain MAFF 303099)).